The following is a 411-amino-acid chain: Secretion apparatus protein BsaZ (411 aa).

4 consecutive transmembrane segments (helical) span residues 28–48, 80–100, 137–157, and 175–195; these read IVAL…VDLT, IAAP…LVQS, ALLY…LYHA, and IVLT…VLIL. Residues 341 to 411 are disordered; that stretch reads AANRGGPPPE…APARTGDQNA (71 aa). The segment covering 370–404 has biased composition (low complexity); sequence DACADNAFPDDAPPGAAAPNAGSPDGPAPDGGAPA.

It belongs to the type III secretion exporter family.

The protein localises to the cell membrane. In terms of biological role, part of the bsa type III secretion system, is involved in the intracellular replication of invading bacteria inside the host cell. Probably necessary for the lysis of the vacuole membrane and escape into the host cell cytoplasm. This chain is Secretion apparatus protein BsaZ (bsaZ), found in Burkholderia pseudomallei (strain K96243).